Consider the following 81-residue polypeptide: Costars family protein ABRACL (81 aa).

This sequence belongs to the costars family.

The chain is Costars family protein ABRACL (abracl) from Danio rerio (Zebrafish).